The chain runs to 244 residues: Dihydropteridine reductase (244 aa).

An N-acetylalanine modification is found at alanine 2. 14 to 38 (LVYGGRGALGSRCVQAFRARNWWVA) contributes to the NADP(+) binding site. N6-succinyllysine is present on residues lysine 73, lysine 79, lysine 96, and lysine 102. The Proton acceptor role is filled by tyrosine 150.

This sequence belongs to the short-chain dehydrogenases/reductases (SDR) family. As to quaternary structure, homodimer.

The catalysed reaction is 5,6,7,8-tetrahydropteridine + NAD(+) = 6,7-dihydropteridine + NADH + H(+). The enzyme catalyses 5,6,7,8-tetrahydropteridine + NADP(+) = 6,7-dihydropteridine + NADPH + H(+). Catalyzes the conversion of quinonoid dihydrobiopterin into tetrahydrobiopterin. The polypeptide is Dihydropteridine reductase (QDPR) (Homo sapiens (Human)).